The chain runs to 295 residues: Sulfotransferase 1A1 (295 aa).

A 3'-phosphoadenylyl sulfate-binding site is contributed by 48-53 (KSGTTW). Residue 106 to 108 (KTH) coordinates substrate. The active-site Proton acceptor is His108. 3'-phosphoadenylyl sulfate contacts are provided by residues Arg130, Ser138, Tyr193, 227–232 (TSFKEM), and 255–259 (FMRKG). Phosphoserine is present on Ser138.

Belongs to the sulfotransferase 1 family. Homodimer. In terms of tissue distribution, liver, lung, adrenal, brain, platelets and skin.

The protein localises to the cytoplasm. The catalysed reaction is a phenol + 3'-phosphoadenylyl sulfate = an aryl sulfate + adenosine 3',5'-bisphosphate + H(+). The enzyme catalyses 17beta-estradiol + 3'-phosphoadenylyl sulfate = 17beta-estradiol 3-sulfate + adenosine 3',5'-bisphosphate + H(+). It carries out the reaction 4-ethylphenol + 3'-phosphoadenylyl sulfate = 4-ethylphenyl sulfate + adenosine 3',5'-bisphosphate + H(+). It catalyses the reaction 4-nitrophenol + 3'-phosphoadenylyl sulfate = 4-nitrophenyl sulfate + adenosine 3',5'-bisphosphate. The catalysed reaction is dopamine + 3'-phosphoadenylyl sulfate = dopamine 3-O-sulfate + adenosine 3',5'-bisphosphate + H(+). The enzyme catalyses dopamine + 3'-phosphoadenylyl sulfate = dopamine 4-O-sulfate + adenosine 3',5'-bisphosphate + H(+). It carries out the reaction 3,3',5-triiodo-L-thyronine + 3'-phosphoadenylyl sulfate = 3,3',5-triiodo-L-thyronine sulfate + adenosine 3',5'-bisphosphate + H(+). It catalyses the reaction 3,3',5'-triiodo-L-thyronine + 3'-phosphoadenylyl sulfate = 3,3',5'-triiodo-L-thyronine sulfate + adenosine 3',5'-bisphosphate + H(+). The catalysed reaction is 3,3'-diiodo-L-thyronine + 3'-phosphoadenylyl sulfate = 3,3'-diiodo-L-thyronine sulfate + adenosine 3',5'-bisphosphate + H(+). The enzyme catalyses L-thyroxine + 3'-phosphoadenylyl sulfate = L-thyroxine sulfate + adenosine 3',5'-bisphosphate + H(+). Functionally, sulfotransferase that utilizes 3'-phospho-5'-adenylyl sulfate (PAPS) as sulfonate donor to catalyze the sulfate conjugation of a wide variety of acceptor molecules bearing a hydroxyl or an amine group. Sulfonation increases the water solubility of most compounds, and therefore their renal excretion, but it can also result in bioactivation to form active metabolites. Displays broad substrate specificity for small phenolic compounds. Plays an important role in the sulfonation of endogenous molecules such as steroid hormones. Mediates the sulfate conjugation of a variety of xenobiotics, including the drugs acetaminophen and minoxidil. Mediates also the metabolic activation of carcinogenic N-hydroxyarylamines leading to highly reactive intermediates capable of forming DNA adducts, potentially resulting in mutagenesis. May play a role in gut microbiota-host metabolic interaction. O-sulfonates 4-ethylphenol (4-EP), a dietary tyrosine-derived metabolite produced by gut bacteria. The product 4-EPS crosses the blood-brain barrier and may negatively regulate oligodendrocyte maturation and myelination, affecting the functional connectivity of different brain regions associated with the limbic system. Catalyzes the sulfate conjugation of dopamine. Catalyzes the sulfation of T4 (L-thyroxine/3,5,3',5'-tetraiodothyronine), T3 (3,5,3'-triiodothyronine), rT3 (3,3',5'-triiodothyronine) and 3,3'-T2 (3,3'-diiodothyronine), with a substrate preference of 3,3'-T2 &gt; rT3 &gt; T3 &gt; T4. In Homo sapiens (Human), this protein is Sulfotransferase 1A1 (SULT1A1).